The following is a 295-amino-acid chain: Small ribosomal subunit protein uS2B (295 aa).

Ser2 bears the N-acetylserine mark. An interaction with PPP1R16B region spans residues 54-113; sequence TWEKLLLAARAIVAIENPADVSVISSRNTGQRAVLKFAAATGATPIAGRFTPGTFTNQIQ. 2 laminin-binding regions span residues 161–180 and 205–229; these read IPCN…MLAR and RDPE…EFQG. Residues 218 to 227 are compositionally biased toward basic and acidic residues; the sequence is AEKAVTKEEF. The interval 218–242 is disordered; it reads AEKAVTKEEFQGEWTAPSPEFTATQ. [DE]-W-[ST] repeat units lie at residues 230 to 232, 247 to 249, 266 to 268, 275 to 277, and 293 to 295; these read EWT and DWS. The segment at 242–295 is laminin-binding; the sequence is QPEVADWSEGVQVPSVPIQQFPTEDWSAQPATEDWSAAPTAQATEWVGATTDWS. A disordered region spans residues 266–295; sequence DWSAQPATEDWSAAPTAQATEWVGATTDWS.

The protein belongs to the universal ribosomal protein uS2 family. As to quaternary structure, monomer (37LRP) and homodimer (67LR). Component of the small ribosomal subunit. Mature ribosomes consist of a small (40S) and a large (60S) subunit. The 40S subunit contains about 33 different proteins and 1 molecule of RNA (18S). The 60S subunit contains about 49 different proteins and 3 molecules of RNA (28S, 5.8S and 5S). Interacts with RPS21. Interacts with several laminins including at least LAMB1. Interacts with MDK. The mature dimeric form interacts with PPP1R16B (via its fourth ankyrin repeat). Interacts with PPP1CA only in the presence of PPP1R16B. In terms of processing, acylated. Acylation may be a prerequisite for conversion of the monomeric 37 kDa laminin receptor precursor (37LRP) to the mature dimeric 67 kDa laminin receptor (67LR), and may provide a mechanism for membrane association. Post-translationally, cleaved by stromelysin-3 (ST3) at the cell surface. Cleavage by stromelysin-3 may be a mechanism to alter cell-extracellular matrix interactions.

It localises to the cell membrane. It is found in the cytoplasm. The protein localises to the nucleus. Functionally, required for the assembly and/or stability of the 40S ribosomal subunit. Required for the processing of the 20S rRNA-precursor to mature 18S rRNA in a late step of the maturation of 40S ribosomal subunits. Also functions as a cell surface receptor for laminin. Plays a role in cell adhesion to the basement membrane and in the consequent activation of signaling transduction pathways. May play a role in cell fate determination and tissue morphogenesis. Also acts as a receptor for several other ligands, including the pathogenic prion protein, viruses, and bacteria. Acts as a PPP1R16B-dependent substrate of PPP1CA. The polypeptide is Small ribosomal subunit protein uS2B (Homo sapiens (Human)).